The sequence spans 813 residues: LPS-assembly protein LptD (813 aa).

The interval M1–G29 is disordered. A signal peptide spans M1 to A52.

The protein belongs to the LptD family. Component of the lipopolysaccharide transport and assembly complex. Interacts with LptE and LptA.

Its subcellular location is the cell outer membrane. In terms of biological role, together with LptE, is involved in the assembly of lipopolysaccharide (LPS) at the surface of the outer membrane. The sequence is that of LPS-assembly protein LptD from Cupriavidus necator (strain ATCC 17699 / DSM 428 / KCTC 22496 / NCIMB 10442 / H16 / Stanier 337) (Ralstonia eutropha).